The primary structure comprises 1217 residues: ATP-dependent helicase/nuclease subunit A (1217 aa).

The UvrD-like helicase ATP-binding domain occupies 10–475; the sequence is VIWTDAQWQS…IDLSQNFRSR (466 aa). 31–38 provides a ligand contact to ATP; that stretch reads AAAGSGKT. Residues 476–786 form the UvrD-like helicase C-terminal domain; that stretch reads KEVLSTTNYI…RMMTIHSSKG (311 aa).

It belongs to the helicase family. AddA subfamily. Heterodimer of AddA and AddB/RexB. The cofactor is Mg(2+).

The enzyme catalyses Couples ATP hydrolysis with the unwinding of duplex DNA by translocating in the 3'-5' direction.. It catalyses the reaction ATP + H2O = ADP + phosphate + H(+). Its function is as follows. The heterodimer acts as both an ATP-dependent DNA helicase and an ATP-dependent, dual-direction single-stranded exonuclease. Recognizes the chi site generating a DNA molecule suitable for the initiation of homologous recombination. The AddA nuclease domain is required for chi fragment generation; this subunit has the helicase and 3' -&gt; 5' nuclease activities. In Staphylococcus aureus (strain NCTC 8325 / PS 47), this protein is ATP-dependent helicase/nuclease subunit A.